The chain runs to 910 residues: Translation factor GUF1 homolog, mitochondrial (910 aa).

Positions 126–188 (RRGNGLPFER…DGGGAPEHPQ (63 aa)) are disordered. Residues 189 to 366 (QNVRNFCILA…RIVSDIPCPA (178 aa)) form the tr-type G domain. GTP contacts are provided by residues 198 to 205 (AHIDSGKS), 259 to 263 (DTPGH), and 313 to 316 (NKID). The segment at 639–683 (GSGDGRADGSADGSADGSADGSGDSSAHGSSDRRGAGCARGSDDI) is disordered. The segment covering 646 to 667 (DGSADGSADGSADGSGDSSAHG) has biased composition (low complexity).

It belongs to the TRAFAC class translation factor GTPase superfamily. Classic translation factor GTPase family. LepA subfamily.

Its subcellular location is the mitochondrion inner membrane. The catalysed reaction is GTP + H2O = GDP + phosphate + H(+). Promotes mitochondrial protein synthesis. May act as a fidelity factor of the translation reaction, by catalyzing a one-codon backward translocation of tRNAs on improperly translocated ribosomes. Binds to mitochondrial ribosomes in a GTP-dependent manner. This Plasmodium vivax (strain Salvador I) protein is Translation factor GUF1 homolog, mitochondrial.